An 83-amino-acid chain; its full sequence is Cytochrome b559 subunit alpha (83 aa).

Residues 21–35 traverse the membrane as a helical segment; that stretch reads IIHSITIPSLFIAGW. Residue H23 participates in heme binding.

The protein belongs to the PsbE/PsbF family. As to quaternary structure, heterodimer of an alpha subunit and a beta subunit. PSII is composed of 1 copy each of membrane proteins PsbA, PsbB, PsbC, PsbD, PsbE, PsbF, PsbH, PsbI, PsbJ, PsbK, PsbL, PsbM, PsbT, PsbX, PsbY, PsbZ, Psb30/Ycf12, at least 3 peripheral proteins of the oxygen-evolving complex and a large number of cofactors. It forms dimeric complexes. Heme b serves as cofactor.

It is found in the plastid. It localises to the chloroplast thylakoid membrane. In terms of biological role, this b-type cytochrome is tightly associated with the reaction center of photosystem II (PSII). PSII is a light-driven water:plastoquinone oxidoreductase that uses light energy to abstract electrons from H(2)O, generating O(2) and a proton gradient subsequently used for ATP formation. It consists of a core antenna complex that captures photons, and an electron transfer chain that converts photonic excitation into a charge separation. The sequence is that of Cytochrome b559 subunit alpha from Lotus japonicus (Lotus corniculatus var. japonicus).